The primary structure comprises 325 residues: Glutarate 2-hydroxylase (325 aa).

Residues H160, D162, and H292 each contribute to the Fe cation site.

Belongs to the glutarate hydroxylase family. As to quaternary structure, homotetramer. Fe(2+) is required as a cofactor.

The enzyme catalyses glutarate + 2-oxoglutarate + O2 = (S)-2-hydroxyglutarate + succinate + CO2. It functions in the pathway amino-acid degradation. Its function is as follows. Acts as an alpha-ketoglutarate-dependent dioxygenase catalyzing hydroxylation of glutarate (GA) to L-2-hydroxyglutarate (L2HG). Functions in a L-lysine degradation pathway that proceeds via cadaverine, glutarate and L-2-hydroxyglutarate. The polypeptide is Glutarate 2-hydroxylase (Escherichia coli (strain UTI89 / UPEC)).